Reading from the N-terminus, the 37-residue chain is Mating pheromone Er-20 (37 aa).

Disulfide bonds link Cys3–Cys18, Cys10–Cys32, and Cys15–Cys24.

In terms of assembly, homodimer.

The protein localises to the secreted. Functionally, mating ciliate pheromones (or gamones) are diffusible extracellular communication signals that distinguish different intraspecific classes of cells commonly referred to as 'mating types'. They prepare the latter for conjugation by changing their cell surface properties. The chain is Mating pheromone Er-20 (MAT20) from Euplotes raikovi.